Reading from the N-terminus, the 215-residue chain is Pyridoxine/pyridoxamine 5'-phosphate oxidase (215 aa).

Substrate contacts are provided by residues 9 to 12 (RRDY) and K67. FMN-binding positions include 62 to 67 (RVVLLK), 77 to 78 (FT), K84, and Q106. 3 residues coordinate substrate: Y124, R128, and S132. Residues 141 to 142 (QS) and W186 contribute to the FMN site. Residue 192–194 (RLH) coordinates substrate. Residue R196 participates in FMN binding.

This sequence belongs to the pyridoxamine 5'-phosphate oxidase family. Homodimer. The cofactor is FMN.

The enzyme catalyses pyridoxamine 5'-phosphate + O2 + H2O = pyridoxal 5'-phosphate + H2O2 + NH4(+). It catalyses the reaction pyridoxine 5'-phosphate + O2 = pyridoxal 5'-phosphate + H2O2. It functions in the pathway cofactor metabolism; pyridoxal 5'-phosphate salvage; pyridoxal 5'-phosphate from pyridoxamine 5'-phosphate: step 1/1. The protein operates within cofactor metabolism; pyridoxal 5'-phosphate salvage; pyridoxal 5'-phosphate from pyridoxine 5'-phosphate: step 1/1. Its function is as follows. Catalyzes the oxidation of either pyridoxine 5'-phosphate (PNP) or pyridoxamine 5'-phosphate (PMP) into pyridoxal 5'-phosphate (PLP). The chain is Pyridoxine/pyridoxamine 5'-phosphate oxidase from Chromohalobacter salexigens (strain ATCC BAA-138 / DSM 3043 / CIP 106854 / NCIMB 13768 / 1H11).